Consider the following 517-residue polypeptide: Bifunctional purine biosynthesis protein PurH (517 aa).

The MGS-like domain occupies M1–V145.

This sequence belongs to the PurH family.

It carries out the reaction (6R)-10-formyltetrahydrofolate + 5-amino-1-(5-phospho-beta-D-ribosyl)imidazole-4-carboxamide = 5-formamido-1-(5-phospho-D-ribosyl)imidazole-4-carboxamide + (6S)-5,6,7,8-tetrahydrofolate. It catalyses the reaction IMP + H2O = 5-formamido-1-(5-phospho-D-ribosyl)imidazole-4-carboxamide. It functions in the pathway purine metabolism; IMP biosynthesis via de novo pathway; 5-formamido-1-(5-phospho-D-ribosyl)imidazole-4-carboxamide from 5-amino-1-(5-phospho-D-ribosyl)imidazole-4-carboxamide (10-formyl THF route): step 1/1. The protein operates within purine metabolism; IMP biosynthesis via de novo pathway; IMP from 5-formamido-1-(5-phospho-D-ribosyl)imidazole-4-carboxamide: step 1/1. The protein is Bifunctional purine biosynthesis protein PurH of Prochlorococcus marinus (strain MIT 9215).